Reading from the N-terminus, the 234-residue chain is Large ribosomal subunit protein eL6 (234 aa).

The protein belongs to the eukaryotic ribosomal protein eL6 family.

The polypeptide is Large ribosomal subunit protein eL6 (RPL6) (Mesembryanthemum crystallinum (Common ice plant)).